The following is a 328-amino-acid chain: DNA polymerase IV (328 aa).

One can recognise a UmuC domain in the interval 6-187 (IIHIDMDYFF…LDIGDFPGVG (182 aa)). D10 and D105 together coordinate Mg(2+). E106 is a catalytic residue.

It belongs to the DNA polymerase type-Y family. As to quaternary structure, monomer. Mg(2+) is required as a cofactor.

It localises to the cytoplasm. It carries out the reaction DNA(n) + a 2'-deoxyribonucleoside 5'-triphosphate = DNA(n+1) + diphosphate. Functionally, poorly processive, error-prone DNA polymerase involved in untargeted mutagenesis. Copies undamaged DNA at stalled replication forks, which arise in vivo from mismatched or misaligned primer ends. These misaligned primers can be extended by PolIV. Exhibits no 3'-5' exonuclease (proofreading) activity. May be involved in translesional synthesis, in conjunction with the beta clamp from PolIII. The polypeptide is DNA polymerase IV (Staphylococcus aureus (strain bovine RF122 / ET3-1)).